A 111-amino-acid chain; its full sequence is COX assembly mitochondrial protein (111 aa).

In terms of domain architecture, CHCH spans 39–82 (YKKCANFVQAMADCAKANGMKVFPTCDKQRDEMKSCLLFYQTDE). 2 short sequence motifs (cx9C motif) span residues 42–52 (CANFVQAMADC) and 64–74 (CDKQRDEMKSC). Intrachain disulfides connect cysteine 42-cysteine 74 and cysteine 52-cysteine 64.

It belongs to the CMC family.

It localises to the mitochondrion inner membrane. Required for mitochondrial cytochrome c oxidase (COX) assembly and respiration. Binds copper. May be involved in copper trafficking and distribution to mitochondrial COX and SOD1. In Saccharomyces cerevisiae (strain YJM789) (Baker's yeast), this protein is COX assembly mitochondrial protein (CMC1).